The chain runs to 182 residues: MQAINRIIAPLKRGLQLLVSRAVVSVVNDAYARQNLQLRLQSEEVADDVERFQNYGHYSVPKAGEAIVVSVGGKRSHLVAVVVDDKSVRPAGLIAGDSVLYHLEGHQLRLTENGEAILSCKKFTIETDTLDCSAQQITFDSPQTTFTGNVDIMGISTATDHQSSGISGKNHDHEERVGKPVP.

The segment at 159–182 (TDHQSSGISGKNHDHEERVGKPVP) is disordered. Positions 169–182 (KNHDHEERVGKPVP) are enriched in basic and acidic residues.

To phage Mu protein gp45.

The protein is Mu-like prophage FluMu protein gp45 of Haemophilus influenzae (strain ATCC 51907 / DSM 11121 / KW20 / Rd).